A 335-amino-acid chain; its full sequence is MDLITLQNFLDNSSFLLLFLTMLIYWAGAAFPNVTWLPTLGTTGVAIANLCMATLLGARWLEAGYFPLSNLYESLFFLAWGVTAIHLVAEQMSRSALVGVVTTPVAMGITAFAALSLPPEMQTSAPLVPALKSNWLMMHVSVMMLSYATLMVGSVLAIAFLVVTRNRDIELKGSSVGTGGYRDKLGRSLLNNNHKQTTVNLTQSNGSGGTAILESVAVKPETVTLSPQRLNLADTLDNISYRIIGLGFPLLTIGIIAGAVWANEAWGSYWSWDPKETWALITWLVFAAYLHARITKGWQGRKPAILAASGFVVVWVCYLGVNLLGKGLHSYGWFF.

8 helical membrane passes run 15–35, 36–56, 68–88, 97–117, 142–162, 243–263, 278–298, and 304–324; these read FLLL…PNVT, WLPT…ATLL, LSNL…IHLV, LVGV…ALSL, VMML…AFLV, IIGL…VWAN, WALI…TKGW, and AILA…VNLL.

Belongs to the CcmF/CycK/Ccl1/NrfE/CcsA family. In terms of assembly, may interact with ccs1.

The protein localises to the cellular thylakoid membrane. Required during biogenesis of c-type cytochromes (cytochrome c6 and cytochrome f) at the step of heme attachment. The polypeptide is Cytochrome c biogenesis protein CcsA (Crocosphaera subtropica (strain ATCC 51142 / BH68) (Cyanothece sp. (strain ATCC 51142))).